A 255-amino-acid chain; its full sequence is Large ribosomal subunit protein uL2 (255 aa).

Residues 201–229 (YAHPHGGGSHQQGGTPVKKNAPPGQKVGF) form a disordered region.

Belongs to the universal ribosomal protein uL2 family. In terms of assembly, part of the 50S ribosomal subunit. Forms a bridge to the 30S subunit in the 70S ribosome.

One of the primary rRNA binding proteins. Required for association of the 30S and 50S subunits to form the 70S ribosome, for tRNA binding and peptide bond formation. It has been suggested to have peptidyltransferase activity; this is somewhat controversial. Makes several contacts with the 16S rRNA in the 70S ribosome. The sequence is that of Large ribosomal subunit protein uL2 from Caldivirga maquilingensis (strain ATCC 700844 / DSM 13496 / JCM 10307 / IC-167).